Consider the following 326-residue polypeptide: Undecaprenyl-phosphate 4-deoxy-4-formamido-L-arabinose transferase (326 aa).

The next 2 helical transmembrane spans lie at 236-256 and 270-290; these read LSVV…LLIV and VFTL…AMGL.

This sequence belongs to the glycosyltransferase 2 family.

The protein resides in the cell inner membrane. It carries out the reaction UDP-4-deoxy-4-formamido-beta-L-arabinose + di-trans,octa-cis-undecaprenyl phosphate = 4-deoxy-4-formamido-alpha-L-arabinopyranosyl di-trans,octa-cis-undecaprenyl phosphate + UDP. It functions in the pathway glycolipid biosynthesis; 4-amino-4-deoxy-alpha-L-arabinose undecaprenyl phosphate biosynthesis; 4-amino-4-deoxy-alpha-L-arabinose undecaprenyl phosphate from UDP-4-deoxy-4-formamido-beta-L-arabinose and undecaprenyl phosphate: step 1/2. Its pathway is bacterial outer membrane biogenesis; lipopolysaccharide biosynthesis. In terms of biological role, catalyzes the transfer of 4-deoxy-4-formamido-L-arabinose from UDP to undecaprenyl phosphate. The modified arabinose is attached to lipid A and is required for resistance to polymyxin and cationic antimicrobial peptides. The protein is Undecaprenyl-phosphate 4-deoxy-4-formamido-L-arabinose transferase of Proteus mirabilis (strain HI4320).